We begin with the raw amino-acid sequence, 122 residues long: Small ribosomal subunit protein uS13 (122 aa).

A disordered region spans residues 99–122; that stretch reads RGQRTHTNARTRKGPAKAIAGKKK.

Belongs to the universal ribosomal protein uS13 family. In terms of assembly, part of the 30S ribosomal subunit. Forms a loose heterodimer with protein S19. Forms two bridges to the 50S subunit in the 70S ribosome.

Its function is as follows. Located at the top of the head of the 30S subunit, it contacts several helices of the 16S rRNA. In the 70S ribosome it contacts the 23S rRNA (bridge B1a) and protein L5 of the 50S subunit (bridge B1b), connecting the 2 subunits; these bridges are implicated in subunit movement. Contacts the tRNAs in the A and P-sites. In Rhizobium etli (strain CIAT 652), this protein is Small ribosomal subunit protein uS13.